A 66-amino-acid polypeptide reads, in one-letter code: DNA-directed RNA polymerase subunit Rpo10 (66 aa).

Cysteine 7, cysteine 10, cysteine 44, and cysteine 45 together coordinate Zn(2+).

The protein belongs to the archaeal Rpo10/eukaryotic RPB10 RNA polymerase subunit family. Part of the RNA polymerase complex. Requires Zn(2+) as cofactor.

The protein localises to the cytoplasm. It carries out the reaction RNA(n) + a ribonucleoside 5'-triphosphate = RNA(n+1) + diphosphate. Functionally, DNA-dependent RNA polymerase (RNAP) catalyzes the transcription of DNA into RNA using the four ribonucleoside triphosphates as substrates. In Hyperthermus butylicus (strain DSM 5456 / JCM 9403 / PLM1-5), this protein is DNA-directed RNA polymerase subunit Rpo10.